Consider the following 299-residue polypeptide: Mycothiol acetyltransferase (299 aa).

2 consecutive N-acetyltransferase domains span residues 1–156 and 149–299; these read MGWT…TYRG and VTMR…ARAL. E33 is a 1D-myo-inositol 2-(L-cysteinylamino)-2-deoxy-alpha-D-glucopyranoside binding site. Residues 75-77 and 83-88 each bind acetyl-CoA; these read LVV and RRGIGT. 1D-myo-inositol 2-(L-cysteinylamino)-2-deoxy-alpha-D-glucopyranoside is bound by residues E176, K218, and E231. Acetyl-CoA contacts are provided by residues 235–237 and 242–248; these read VGI and QGRGLGR. Y269 contacts 1D-myo-inositol 2-(L-cysteinylamino)-2-deoxy-alpha-D-glucopyranoside. Position 274-279 (274-279) interacts with acetyl-CoA; it reads NTAALH.

The protein belongs to the acetyltransferase family. MshD subfamily. As to quaternary structure, monomer.

It carries out the reaction 1D-myo-inositol 2-(L-cysteinylamino)-2-deoxy-alpha-D-glucopyranoside + acetyl-CoA = mycothiol + CoA + H(+). In terms of biological role, catalyzes the transfer of acetyl from acetyl-CoA to desacetylmycothiol (Cys-GlcN-Ins) to form mycothiol. This Rhodococcus erythropolis (strain PR4 / NBRC 100887) protein is Mycothiol acetyltransferase.